The chain runs to 160 residues: Protein-export protein SecB (160 aa).

The protein belongs to the SecB family. In terms of assembly, homotetramer, a dimer of dimers. One homotetramer interacts with 1 SecA dimer.

It is found in the cytoplasm. One of the proteins required for the normal export of preproteins out of the cell cytoplasm. It is a molecular chaperone that binds to a subset of precursor proteins, maintaining them in a translocation-competent state. It also specifically binds to its receptor SecA. The sequence is that of Protein-export protein SecB from Burkholderia multivorans (strain ATCC 17616 / 249).